We begin with the raw amino-acid sequence, 54 residues long: Rubredoxin (54 aa).

The Rubredoxin-like domain occupies 1–54 (MKKYQCIVCGWIYDEAEGWPQDGIAPGTKWEDIPDDWTCPDCGVSKVDFEMIEV). Fe cation-binding residues include Cys-6, Cys-9, Cys-39, and Cys-42.

It belongs to the rubredoxin family. The cofactor is Fe(3+).

Its subcellular location is the cytoplasm. It functions in the pathway hydrocarbon metabolism; alkane degradation. In terms of biological role, involved in the hydrocarbon hydroxylating system, which transfers electrons from NADH to rubredoxin reductase and then through rubredoxin to alkane 1 monooxygenase. The sequence is that of Rubredoxin (rubA) from Acinetobacter baylyi (strain ATCC 33305 / BD413 / ADP1).